A 524-amino-acid polypeptide reads, in one-letter code: Mediator of RNA polymerase II transcription subunit 8 (524 aa).

Met-1 carries the N-acetylmethionine modification. Residues 137–162 (MQIERLKARMDMIAAACENAERVLAD) are a coiled coil. 2 disordered regions span residues 291-315 (VPSPQHQIQQQQFQQQQQRSKLMQL) and 474-524 (MMQT…QNPQ). 2 stretches are compositionally biased toward low complexity: residues 295-315 (QHQIQQQQFQQQQQRSKLMQL) and 474-505 (MMQTQQTQIQQSQQQQQQQQQGGYGNMQTNQQ). A compositionally biased stretch (polar residues) spans 506–524 (SLQPNNMMQNAQQRHQNPQ).

This sequence belongs to the Mediator complex subunit 8 family. In terms of assembly, component of the Mediator complex.

It localises to the nucleus. Its function is as follows. Component of the Mediator complex, a coactivator involved in the regulated transcription of nearly all RNA polymerase II-dependent genes. Mediator functions as a bridge to convey information from gene-specific regulatory proteins to the basal RNA polymerase II transcription machinery. The Mediator complex, having a compact conformation in its free form, is recruited to promoters by direct interactions with regulatory proteins and serves for the assembly of a functional preinitiation complex with RNA polymerase II and the general transcription factors. Regulator of both plant defense and flowering time. Involved in pollen tube growth. The polypeptide is Mediator of RNA polymerase II transcription subunit 8 (MED8) (Arabidopsis thaliana (Mouse-ear cress)).